The chain runs to 1001 residues: Phosphatidylinositol 4,5-bisphosphate 5-phosphatase A (1001 aa).

The span at 1-12 (MEGQSRSGSAKS) shows a compositional bias: polar residues. 2 disordered regions span residues 1 to 130 (MEGQ…VASV) and 144 to 412 (SASA…QPTC). The RSXSXX motif 1 motif lies at 6 to 11 (RSGSAK). Residues 13 to 28 (GTRTGLGPLPGTHGAL) are compositionally biased toward low complexity. Positions 29 to 42 (QTGTPSKKVNSSFQ) are enriched in polar residues. The residue at position 56 (R56) is an Asymmetric dimethylarginine; alternate. Omega-N-methylarginine; alternate is present on R56. The residue at position 65 (R65) is an Omega-N-methylarginine. R76 is modified (asymmetric dimethylarginine). R83 carries the post-translational modification Asymmetric dimethylarginine; alternate. At R83 the chain carries Omega-N-methylarginine; alternate. Over residues 161–174 (SPTSRDQKQLSPTS) the composition is skewed to polar residues. Phosphoserine is present on S171. Residues 180-196 (ALATSGLSLALASQEQP) show a composition bias toward low complexity. Residues 197 to 210 (PQSPSSPSPVPSPV) show a composition bias toward pro residues. Over residues 284 to 294 (ARPEAPRHSPE) the composition is skewed to basic and acidic residues. Residues S292 and S325 each carry the phosphoserine modification. Residues 338–348 (VPPPLPKPPRS) show a composition bias toward pro residues. Residues 346–351 (PRSPSR) carry the SH3-binding motif. Low complexity-rich tracts occupy residues 349–361 (PSRSPSRSPNRSP) and 394–411 (SPVATATSPTSSWSAQPT). An RSXSXX motif 2 motif is present at residues 351–356 (RSPSRS). Residues 420 to 723 (ITVVTWNVGT…SDHKPVAARF (304 aa)) are catalytic. The interval 724 to 835 (LLQFAFRDDV…IGVTEPFQIS (112 aa)) is required for ruffle localization. The interval 837–1001 (PTSESASSST…LGLEDGGLGP (165 aa)) is disordered. Low complexity predominate over residues 838 to 853 (TSESASSSTDSSGTSS). Short sequence motifs (RSXSXX motif) lie at residues 869 to 874 (RSPSPG) and 880 to 885 (RSRSPG). A Phosphoserine modification is found at S898. Low complexity-rich tracts occupy residues 905-917 (SRSPSPQSRQLPR) and 925-936 (SSGSRGSSEEGP). Residues 906–911 (RSPSPQ) carry the RSXSXX motif 5 motif. Residues 937–949 (SGPPGPWAFPPAV) are compositionally biased toward pro residues. S985 is modified (phosphoserine).

It belongs to the inositol 1,4,5-trisphosphate 5-phosphatase type II family. Phosphorylated on Ser/Thr residues. In terms of tissue distribution, expressed in heart, brain, kidney, stomach, small intestine and lung. Not expressed in spleen, thymus, skeletal muscle, testis and skin.

It is found in the cytoplasm. The enzyme catalyses 1D-myo-inositol 1,4,5-trisphosphate + H2O = 1D-myo-inositol 1,4-bisphosphate + phosphate. It catalyses the reaction 1D-myo-inositol 1,3,4,5-tetrakisphosphate + H2O = 1D-myo-inositol 1,3,4-trisphosphate + phosphate. It carries out the reaction a 1,2-diacyl-sn-glycero-3-phospho-(1D-myo-inositol-4,5-bisphosphate) + H2O = a 1,2-diacyl-sn-glycero-3-phospho-(1D-myo-inositol 4-phosphate) + phosphate. Its function is as follows. Inositol 5-phosphatase, which converts inositol 1,4,5-trisphosphate to inositol 1,4-bisphosphate. Also converts phosphatidylinositol 4,5-bisphosphate to phosphatidylinositol 4-phosphate and inositol 1,3,4,5-tetrakisphosphate to inositol 1,3,4-trisphosphate in vitro. May be involved in modulation of the function of inositol and phosphatidylinositol polyphosphate-binding proteins that are present at membranes ruffles. This chain is Phosphatidylinositol 4,5-bisphosphate 5-phosphatase A (Inpp5j), found in Rattus norvegicus (Rat).